A 310-amino-acid polypeptide reads, in one-letter code: Vomeronasal type-1 receptor 53 (310 aa).

At 1-20 (MNKANLLHTDINLKITLFSE) the chain is on the extracellular side. Residues 21-41 (VSVGISANSILIFAHLCMLLG) form a helical membrane-spanning segment. Over 42–50 (ENRPKPIDL) the chain is Cytoplasmic. Residues 51–71 (YIAFFSLTQLMLLITMGLIAV) traverse the membrane as a helical segment. Over 72–93 (DMFMPWGRWDSTTCQSLIYLHR) the chain is Extracellular. C85 and C172 are oxidised to a cystine. The chain crosses the membrane as a helical span at residues 94-114 (LLRGLTLSATCLLNVLWTITL). The Cytoplasmic segment spans residues 115 to 134 (SPRSSCLTKFKHKSLQHISC). The chain crosses the membrane as a helical span at residues 135 to 155 (AFLFLCVLYMSFNSHLFISII). Residues 156–183 (AYPNLTLENFMYVTQSCSLIPLSYFRKS) are Extracellular-facing. N159 carries N-linked (GlcNAc...) asparagine glycosylation. Residues 184 to 204 (MFSIPMAIREALLIGLMALSG) form a helical membrane-spanning segment. At 205–238 (GYMVAHLWRHKKQAQHLHRTSLSSKASPEQRATR) the chain is on the cytoplasmic side. The helical transmembrane segment at 239-259 (TIMLLMSFFVVLYILDLVIFH) threads the bilayer. Over 260-268 (SRMKFKDGS) the chain is Extracellular. Residues 269–289 (ILYGVQIIVSHSYATVSPFVF) traverse the membrane as a helical segment. The Cytoplasmic portion of the chain corresponds to 290–310 (ICTEKRITNFLRSMCGRIVNI).

The protein belongs to the G-protein coupled receptor 1 family.

It is found in the cell membrane. In terms of biological role, putative pheromone receptor implicated in the regulation of social and reproductive behavior. This Mus musculus (Mouse) protein is Vomeronasal type-1 receptor 53 (Vmn1r53).